A 297-amino-acid polypeptide reads, in one-letter code: tRNA dimethylallyltransferase (297 aa).

15-22 contacts ATP; sequence GPTASGKS. 17 to 22 is a binding site for substrate; the sequence is TASGKS. Interaction with substrate tRNA stretches follow at residues 40 to 43 and 164 to 168; these read DSMQ and QRIVR.

This sequence belongs to the IPP transferase family. As to quaternary structure, monomer. Mg(2+) serves as cofactor.

It carries out the reaction adenosine(37) in tRNA + dimethylallyl diphosphate = N(6)-dimethylallyladenosine(37) in tRNA + diphosphate. Catalyzes the transfer of a dimethylallyl group onto the adenine at position 37 in tRNAs that read codons beginning with uridine, leading to the formation of N6-(dimethylallyl)adenosine (i(6)A). This chain is tRNA dimethylallyltransferase, found in Rhizobium etli (strain ATCC 51251 / DSM 11541 / JCM 21823 / NBRC 15573 / CFN 42).